Consider the following 395-residue polypeptide: MLNIAALRQQQIPLAAEPRSPVPFHILMKPIGPACNLACRYCYYPQDETPVNKMDDARLEQFIRRYIAAQPAGAREINFVWQGGEPLLAGLSFYKKALALQARYAPDGVTISNSLQTNGTLINDAWCRLFREHGFIIGLGLEGNEALQDYHRPDKRGRSTWSAALRGIDLLHQHQVDFNLLVVVHNEMAAHAAAIYVRLVSLGARYLQFQPLMSEGAALREGYQLSADNWGRFMVGIWRQWRKRCDRGRVFVINIEQAWAQYFTHTSGSCVHSARCGSNLVMESDGQLYACDHLINTEHRLGRLDEQTLAAAVDASVQLPFGQQKSLRRECQTCSVKMVCQGGCPAHLNAAGNNRLCGGYYRFFSDILAPLRPFSRDLNGLKAWRAAFVGTAHTA.

The Radical SAM core domain occupies Pro-18 to Arg-249. Positions 35 and 39 each coordinate [4Fe-4S] cluster. Tyr-41 contributes to the S-adenosyl-L-methionine binding site. Residue Cys-42 participates in [4Fe-4S] cluster binding. Residues Gly-84 and Arg-152 each contribute to the S-adenosyl-L-methionine site. Cys-270, Cys-276, and Cys-291 together coordinate [4Fe-4S] cluster. Asp-292 acts as the Proton acceptor in catalysis. Positions 331, 334, 340, 344, and 357 each coordinate [4Fe-4S] cluster.

Belongs to the radical SAM superfamily. Anaerobic sulfatase-maturating enzyme family. In terms of assembly, monomer. Interacts with AtsA prior to its export to the periplasm. This interaction depends on the presence of AtsA 'Ser-72'. Binding of SAM to AtsB promotes the formation of a ternary AtsA-AtsB-SAM complex. [4Fe-4S] cluster serves as cofactor.

It is found in the cytoplasm. It catalyses the reaction L-seryl-[sulfatase] + S-adenosyl-L-methionine = 3-oxo-L-alanyl-[sulfatase] + 5'-deoxyadenosine + L-methionine + H(+). It functions in the pathway protein modification; sulfatase oxidation. Its activity is regulated as follows. Activity is inhibited by iron chelators. In terms of biological role, involved in 'Ser-type' sulfatase maturation under anaerobic conditions. Catalyzes the post-translational modification of serine ('Ser-72' in the arylsulfatase AtsA) into 3-oxoalanine (also known as C(alpha)-formylglycine (FGly)), by a free radical chemical mechanism initiated via the reductive cleavage of S-adenosyl-L-methionine (SAM). Is capable of catalyzing multiple turnovers. In vitro, use of a peptide substrate in which the target serine is changed to cysteine also gives rise to turnover, supporting approximately 4-fold the activity of that observed with the natural substrate. This chain is Serine-type anaerobic sulfatase-maturating enzyme, found in Klebsiella pneumoniae.